A 504-amino-acid polypeptide reads, in one-letter code: Amidophosphoribosyltransferase (504 aa).

The Nucleophile role is filled by Cys2. The 234-residue stretch at 2–235 (CGIVGIVSQS…PGEAIYVTFE (234 aa)) folds into the Glutamine amidotransferase type-2 domain. Thr305, Asp367, and Asp368 together coordinate Mg(2+).

The protein in the C-terminal section; belongs to the purine/pyrimidine phosphoribosyltransferase family. Mg(2+) is required as a cofactor.

It carries out the reaction 5-phospho-beta-D-ribosylamine + L-glutamate + diphosphate = 5-phospho-alpha-D-ribose 1-diphosphate + L-glutamine + H2O. It functions in the pathway purine metabolism; IMP biosynthesis via de novo pathway; N(1)-(5-phospho-D-ribosyl)glycinamide from 5-phospho-alpha-D-ribose 1-diphosphate: step 1/2. Catalyzes the formation of phosphoribosylamine from phosphoribosylpyrophosphate (PRPP) and glutamine. The polypeptide is Amidophosphoribosyltransferase (Pasteurella multocida (strain Pm70)).